Reading from the N-terminus, the 175-residue chain is FOXL2 neighbor protein (175 aa).

Disordered stretches follow at residues 1–39 (MTRT…PALV) and 70–100 (AQKT…GKRR).

This Homo sapiens (Human) protein is FOXL2 neighbor protein (FOXL2NB).